The sequence spans 315 residues: Methionyl-tRNA formyltransferase (315 aa).

113–116 (SLLP) contributes to the (6S)-5,6,7,8-tetrahydrofolate binding site.

The protein belongs to the Fmt family.

It catalyses the reaction L-methionyl-tRNA(fMet) + (6R)-10-formyltetrahydrofolate = N-formyl-L-methionyl-tRNA(fMet) + (6S)-5,6,7,8-tetrahydrofolate + H(+). Functionally, attaches a formyl group to the free amino group of methionyl-tRNA(fMet). The formyl group appears to play a dual role in the initiator identity of N-formylmethionyl-tRNA by promoting its recognition by IF2 and preventing the misappropriation of this tRNA by the elongation apparatus. In Shigella dysenteriae serotype 1 (strain Sd197), this protein is Methionyl-tRNA formyltransferase.